We begin with the raw amino-acid sequence, 416 residues long: Tryptophan synthase beta chain (416 aa).

The residue at position 98 (K98) is an N6-(pyridoxal phosphate)lysine.

This sequence belongs to the TrpB family. Tetramer of two alpha and two beta chains. It depends on pyridoxal 5'-phosphate as a cofactor.

It catalyses the reaction (1S,2R)-1-C-(indol-3-yl)glycerol 3-phosphate + L-serine = D-glyceraldehyde 3-phosphate + L-tryptophan + H2O. It functions in the pathway amino-acid biosynthesis; L-tryptophan biosynthesis; L-tryptophan from chorismate: step 5/5. Its function is as follows. The beta subunit is responsible for the synthesis of L-tryptophan from indole and L-serine. This is Tryptophan synthase beta chain from Ruegeria pomeroyi (strain ATCC 700808 / DSM 15171 / DSS-3) (Silicibacter pomeroyi).